Here is a 670-residue protein sequence, read N- to C-terminus: DNA ligase (670 aa).

NAD(+)-binding positions include 32-36, 81-82, and glutamate 110; these read DAEYD and SL. Lysine 112 functions as the N6-AMP-lysine intermediate in the catalytic mechanism. The NAD(+) site is built by arginine 133, glutamate 170, lysine 289, and lysine 313. Residues cysteine 407, cysteine 410, cysteine 425, and cysteine 431 each coordinate Zn(2+). The BRCT domain maps to 590–670; sequence ESQLSLKGQT…ALMDLLNAAN (81 aa).

Belongs to the NAD-dependent DNA ligase family. LigA subfamily. Requires Mg(2+) as cofactor. Mn(2+) is required as a cofactor.

It catalyses the reaction NAD(+) + (deoxyribonucleotide)n-3'-hydroxyl + 5'-phospho-(deoxyribonucleotide)m = (deoxyribonucleotide)n+m + AMP + beta-nicotinamide D-nucleotide.. Functionally, DNA ligase that catalyzes the formation of phosphodiester linkages between 5'-phosphoryl and 3'-hydroxyl groups in double-stranded DNA using NAD as a coenzyme and as the energy source for the reaction. It is essential for DNA replication and repair of damaged DNA. The protein is DNA ligase of Shewanella frigidimarina (strain NCIMB 400).